The chain runs to 261 residues: Protein FAM78B (261 aa).

Belongs to the FAM78 family.

In Homo sapiens (Human), this protein is Protein FAM78B (FAM78B).